The primary structure comprises 673 residues: Annexin A6 (673 aa).

An N-acetylalanine modification is found at Ala-2. Phosphoserine is present on Ser-13. Annexin repeat units lie at residues 20–91, 92–163, 175–247, 251–322, 363–434, 435–506, 521–595, and 599–670; these read FDAN…NLMR, PLAY…VLLQ, DLVQ…AVVK, STPE…KLCG, FNPD…GLMM, PPAH…SLAT, EDAQ…AIVQ, and NKPL…ALCG. A Phosphotyrosine modification is found at Tyr-30. N6-acetyllysine occurs at positions 63, 68, 75, and 81. Tyr-201 is modified (phosphotyrosine). N6-acetyllysine is present on residues Lys-306, Lys-370, and Lys-418. Residue Ser-422 is modified to Phosphoserine. N6-acetyllysine is present on Lys-483. Phosphoserine is present on Ser-537. Lys-620 carries the N6-acetyllysine modification.

Belongs to the annexin family.

It is found in the cytoplasm. The protein localises to the melanosome. May associate with CD21. May regulate the release of Ca(2+) from intracellular stores. This chain is Annexin A6 (Anxa6), found in Mus musculus (Mouse).